Reading from the N-terminus, the 154-residue chain is Large ribosomal subunit protein uL23 (154 aa).

This sequence belongs to the universal ribosomal protein uL23 family.

Functionally, this protein binds to a specific region on the 26S rRNA. This Fritillaria agrestis (Stinkbells) protein is Large ribosomal subunit protein uL23 (RPL23A).